A 406-amino-acid chain; its full sequence is Putative phosphate permease PH0640 (406 aa).

The next 11 membrane-spanning stretches (helical) occupy residues 2–22, 45–65, 83–103, 114–134, 140–160, 182–202, 207–227, 265–285, 288–308, 330–350, and 385–405; these read IPID…AWAI, AVLI…KTVT, VLIY…IIAT, SIIG…IVNW, VVLS…LVFR, FWIG…VLHG, IGIL…TSML, VANA…GLAG, VPVP…GVAT, FTID…GMPI, and FVTV…LLLI.

The protein belongs to the inorganic phosphate transporter (PiT) (TC 2.A.20) family.

It localises to the cell membrane. In terms of biological role, potential transporter for phosphate. The polypeptide is Putative phosphate permease PH0640 (Pyrococcus horikoshii (strain ATCC 700860 / DSM 12428 / JCM 9974 / NBRC 100139 / OT-3)).